The following is a 338-amino-acid chain: D-erythrose-4-phosphate dehydrogenase (338 aa).

11–12 (RI) is an NAD(+) binding site. Substrate is bound by residues 153 to 155 (SCT), R199, 212 to 213 (TK), and R235. C154 (nucleophile) is an active-site residue. N317 is a binding site for NAD(+).

The protein belongs to the glyceraldehyde-3-phosphate dehydrogenase family. Epd subfamily. As to quaternary structure, homotetramer.

The protein resides in the cytoplasm. It carries out the reaction D-erythrose 4-phosphate + NAD(+) + H2O = 4-phospho-D-erythronate + NADH + 2 H(+). The protein operates within cofactor biosynthesis; pyridoxine 5'-phosphate biosynthesis; pyridoxine 5'-phosphate from D-erythrose 4-phosphate: step 1/5. In terms of biological role, catalyzes the NAD-dependent conversion of D-erythrose 4-phosphate to 4-phosphoerythronate. The sequence is that of D-erythrose-4-phosphate dehydrogenase from Shewanella amazonensis (strain ATCC BAA-1098 / SB2B).